A 178-amino-acid polypeptide reads, in one-letter code: Small ribosomal subunit protein bS16 (178 aa).

Residues 78-178 (KLGITQWTAG…AAPAEGEEQA (101 aa)) form a disordered region. A compositionally biased stretch (basic and acidic residues) spans 91–113 (KKGEPGQKAKERAEERAQREADR). Positions 114-127 (AAAAAEAAAAPAEE) are enriched in low complexity. Residues 128-139 (APAEEAPAEEAA) are compositionally biased toward acidic residues. The segment covering 140-172 (AEAAPEAAAAEEAPAAEAAAEEAAPAAEEAAPA) has biased composition (low complexity).

Belongs to the bacterial ribosomal protein bS16 family.

The protein is Small ribosomal subunit protein bS16 of Phenylobacterium zucineum (strain HLK1).